The following is a 448-amino-acid chain: Exodeoxyribonuclease 7 large subunit (448 aa).

It belongs to the XseA family. As to quaternary structure, heterooligomer composed of large and small subunits.

The protein resides in the cytoplasm. The catalysed reaction is Exonucleolytic cleavage in either 5'- to 3'- or 3'- to 5'-direction to yield nucleoside 5'-phosphates.. Functionally, bidirectionally degrades single-stranded DNA into large acid-insoluble oligonucleotides, which are then degraded further into small acid-soluble oligonucleotides. The chain is Exodeoxyribonuclease 7 large subunit from Bacillus pumilus (strain SAFR-032).